A 129-amino-acid polypeptide reads, in one-letter code: Small ribosomal subunit protein uS11 (129 aa).

The protein belongs to the universal ribosomal protein uS11 family. In terms of assembly, part of the 30S ribosomal subunit. Interacts with proteins S7 and S18. Binds to IF-3.

Located on the platform of the 30S subunit, it bridges several disparate RNA helices of the 16S rRNA. Forms part of the Shine-Dalgarno cleft in the 70S ribosome. This Desulfitobacterium hafniense (strain DSM 10664 / DCB-2) protein is Small ribosomal subunit protein uS11.